We begin with the raw amino-acid sequence, 185 residues long: Threonylcarbamoyl-AMP synthase (185 aa).

Residues 3-185 form the YrdC-like domain; the sequence is EQAPAEVKQV…IDAISGKILR (183 aa).

The protein belongs to the SUA5 family. TsaC subfamily.

It is found in the cytoplasm. The enzyme catalyses L-threonine + hydrogencarbonate + ATP = L-threonylcarbamoyladenylate + diphosphate + H2O. Its function is as follows. Required for the formation of a threonylcarbamoyl group on adenosine at position 37 (t(6)A37) in tRNAs that read codons beginning with adenine. Catalyzes the conversion of L-threonine, HCO(3)(-)/CO(2) and ATP to give threonylcarbamoyl-AMP (TC-AMP) as the acyladenylate intermediate, with the release of diphosphate. The protein is Threonylcarbamoyl-AMP synthase of Shewanella woodyi (strain ATCC 51908 / MS32).